A 510-amino-acid chain; its full sequence is MVTIRADEISKIIRERIEQYNTEVKIVNTGTVLQVGDGIARIYGLDEVMAGELVEFEEGTIGIALNLESKNVGVVLMGDGLMIQEGSSVKATGRIAQIPVSEAYLGRVINALAKPIDGRGEISASESRLIESPAPGIISRRSVYEPLQTGLIAIDSMIPIGRGQRELIIGDRQTGKTAVATDTILNQQGQNVICVYVAIGQKASSVAQVVNTLQERGAMEYTIVVAETADSPATLQYLAPYTGAALAEYFMYRERHTLIIYDDLSKQAQAYRQMSLLLRRPPGREAYPGDVFYLHSRLLERAAKLSSQLGEGSMTALPIVETQSGDVSAYIPTNVISITDGQIFLSADLFNAGIRPAINVGISVSRVGSAAQIKAMKQVAGKLKLELAQFAELEAFAQFSSDLDKATQNQLARGQRLRELLKQSQSAPLTVEEQIITIYTGTNGYLDSLEIGQVRKFLVELRAYLNTNKPQFKEIISSTKTFTGEAEVLLKEAIQEQMELFLLQEQVEKN.

170 to 177 (GDRQTGKT) is a binding site for ATP.

The protein belongs to the ATPase alpha/beta chains family. In terms of assembly, F-type ATPases have 2 components, CF(1) - the catalytic core - and CF(0) - the membrane proton channel. CF(1) has five subunits: alpha(3), beta(3), gamma(1), delta(1), epsilon(1). CF(0) has four main subunits: a, b, b' and c.

It is found in the plastid. It localises to the chloroplast thylakoid membrane. The catalysed reaction is ATP + H2O + 4 H(+)(in) = ADP + phosphate + 5 H(+)(out). Functionally, produces ATP from ADP in the presence of a proton gradient across the membrane. The alpha chain is a regulatory subunit. In Glycine max (Soybean), this protein is ATP synthase subunit alpha, chloroplastic.